A 437-amino-acid polypeptide reads, in one-letter code: MQLGVRLRFQKFEYPEANPEALPEGIDPEEYIIGTYYMSFPKGMNPFEITQVLALEQSTGTWLPVPGETPEVRRKHVAKVVGVYEIPDYEIMVPQEVDWRNFIVQIAFPWRNIGSKLSMLFSTVVGNISMAPKLKLLDLRFPKEFVKGFKGPKFGIEGVRDVLGVKDRPLLNNMIKPDVYSPPDLGAKLAYEVARGGVDIIKDDELLANPEFNRIEERVPKFMEAIDRADEEKGEKTLYAVNVTADLPEVLENAERAIELGANCLLVNYLATGFPVLRALAEDESIKVPIMAHMDVAGAYYVSPISGVRSTLILGKLPRLAGADIVVYPAPYGKAPMMEEKYIEVAKQHRYPFYHIKPCFPMPSGGIAPIMVPKLVNTLGKDFVVAAGGGIHAHPDGPAAGARAFRQAIDAAMQGYTDLRKYAEENNLQELLKALQL.

Residue lysine 176 is the Proton acceptor of the active site. Residues lysine 202, aspartate 204, and glutamate 205 each contribute to the Mg(2+) site. Lysine 202 bears the N6-carboxylysine mark. The Proton acceptor role is filled by histidine 293.

This sequence belongs to the RuBisCO large chain family. Type IV subfamily. As to quaternary structure, homodimer. Mg(2+) is required as a cofactor.

In terms of biological role, may be involved in sulfur metabolism and oxidative stress response. Does not show RuBisCO activity. This Archaeoglobus fulgidus (strain ATCC 49558 / DSM 4304 / JCM 9628 / NBRC 100126 / VC-16) protein is Ribulose bisphosphate carboxylase-like protein.